Consider the following 477-residue polypeptide: Glycogen synthase (477 aa).

Residue Lys15 participates in ADP-alpha-D-glucose binding.

It belongs to the glycosyltransferase 1 family. Bacterial/plant glycogen synthase subfamily.

It carries out the reaction [(1-&gt;4)-alpha-D-glucosyl](n) + ADP-alpha-D-glucose = [(1-&gt;4)-alpha-D-glucosyl](n+1) + ADP + H(+). It participates in glycan biosynthesis; glycogen biosynthesis. Functionally, synthesizes alpha-1,4-glucan chains using ADP-glucose. In Clostridium acetobutylicum (strain ATCC 824 / DSM 792 / JCM 1419 / IAM 19013 / LMG 5710 / NBRC 13948 / NRRL B-527 / VKM B-1787 / 2291 / W), this protein is Glycogen synthase.